The chain runs to 396 residues: NADH-quinone oxidoreductase subunit D 1 (396 aa).

The protein belongs to the complex I 49 kDa subunit family. In terms of assembly, NDH-1 is composed of 14 different subunits. Subunits NuoB, C, D, E, F, and G constitute the peripheral sector of the complex.

The protein localises to the cell inner membrane. The enzyme catalyses a quinone + NADH + 5 H(+)(in) = a quinol + NAD(+) + 4 H(+)(out). Its function is as follows. NDH-1 shuttles electrons from NADH, via FMN and iron-sulfur (Fe-S) centers, to quinones in the respiratory chain. The immediate electron acceptor for the enzyme in this species is believed to be ubiquinone. Couples the redox reaction to proton translocation (for every two electrons transferred, four hydrogen ions are translocated across the cytoplasmic membrane), and thus conserves the redox energy in a proton gradient. This is NADH-quinone oxidoreductase subunit D 1 from Rhizobium etli (strain CIAT 652).